The chain runs to 435 residues: Transmembrane protease serine 4 (435 aa).

Over 1 to 30 the chain is Cytoplasmic; the sequence is MESDSGQPLNNRDIVPFRKPRRPQETFKKV. A helical; Signal-anchor for type II membrane protein transmembrane segment spans residues 31 to 51; that stretch reads GIPIIAVLLSLIALVIVALLI. At 52-435 the chain is on the extracellular side; the sequence is KVILDKYYFI…WIYNVRKSEM (384 aa). The 43-residue stretch at 59–101 folds into the LDL-receptor class A domain; it reads YFICGSPLTFIQRGQLCDGHLDCASGEDEEHCVKDFPEKPGVA. Disulfide bonds link cysteine 62–cysteine 81, cysteine 75–cysteine 90, cysteine 125–cysteine 181, cysteine 138–cysteine 191, cysteine 194–cysteine 308, cysteine 228–cysteine 244, cysteine 354–cysteine 370, and cysteine 381–cysteine 408. The 101-residue stretch at 102–202 folds into the SRCR domain; sequence VRLSKDRSTL…DCGKSLKTPR (101 aa). Asparagine 128 and asparagine 176 each carry an N-linked (GlcNAc...) asparagine glycan. The region spanning 203-432 is the Peptidase S1 domain; sequence VVGGVEAPVD…YLNWIYNVRK (230 aa). Catalysis depends on charge relay system residues histidine 243 and aspartate 288. The active-site Charge relay system is serine 385.

This sequence belongs to the peptidase S1 family. Proteolytically processed; probably by an autocatalytic mechanism.

The protein localises to the cell membrane. It localises to the secreted. Functionally, plasma membrane-anchored serine protease that directly induces processing of pro-uPA/PLAU into the active form through proteolytic activity. Seems to be capable of activating ENaC. This chain is Transmembrane protease serine 4, found in Mus musculus (Mouse).